A 149-amino-acid chain; its full sequence is Transcription antitermination protein NusB (149 aa).

This sequence belongs to the NusB family.

Involved in transcription antitermination. Required for transcription of ribosomal RNA (rRNA) genes. Binds specifically to the boxA antiterminator sequence of the ribosomal RNA (rrn) operons. This is Transcription antitermination protein NusB from Acinetobacter baumannii (strain AB307-0294).